Here is a 257-residue protein sequence, read N- to C-terminus: Imidazole glycerol phosphate synthase subunit HisF (257 aa).

Catalysis depends on residues Asp-11 and Asp-130.

It belongs to the HisA/HisF family. In terms of assembly, heterodimer of HisH and HisF.

Its subcellular location is the cytoplasm. It carries out the reaction 5-[(5-phospho-1-deoxy-D-ribulos-1-ylimino)methylamino]-1-(5-phospho-beta-D-ribosyl)imidazole-4-carboxamide + L-glutamine = D-erythro-1-(imidazol-4-yl)glycerol 3-phosphate + 5-amino-1-(5-phospho-beta-D-ribosyl)imidazole-4-carboxamide + L-glutamate + H(+). The protein operates within amino-acid biosynthesis; L-histidine biosynthesis; L-histidine from 5-phospho-alpha-D-ribose 1-diphosphate: step 5/9. Its function is as follows. IGPS catalyzes the conversion of PRFAR and glutamine to IGP, AICAR and glutamate. The HisF subunit catalyzes the cyclization activity that produces IGP and AICAR from PRFAR using the ammonia provided by the HisH subunit. This Actinobacillus pleuropneumoniae serotype 7 (strain AP76) protein is Imidazole glycerol phosphate synthase subunit HisF.